The chain runs to 1312 residues: uncharacterized protein (1312 aa).

An N-terminal signal peptide occupies residues 1 to 20 (MRNNLIYTMFLSCLHFETFC). Residues 299 to 344 (TTTSSSTMLSSTTLLTTETETRESSSTGSTQTTTPSTEPSTTITTP) are compositionally biased toward low complexity. 8 disordered regions span residues 299–503 (TTTS…TTTY), 565–609 (EITS…PTGG), 645–692 (KETR…PTGG), 749–775 (SSSS…PTGG), 812–864 (KTRT…GGTT), 899–942 (KTRT…PTGG), 1048–1079 (KTRT…TGGT), and 1114–1165 (NTTR…TLET). Over residues 345–357 (MEQSSTVSSVQKT) the composition is skewed to polar residues. The span at 365-503 (SSSTTVPTSA…STPATPTTTY (139 aa)) shows a compositional bias: low complexity. Basic and acidic residues predominate over residues 565-574 (EITSDAEGCK). Positions 576–609 (TSSTPTPSSTSVHSTTATPSTTPGTTTYNWPTGG) are enriched in low complexity. The span at 645 to 659 (KETRTETTTDADGCK) shows a compositional bias: basic and acidic residues. A compositionally biased stretch (low complexity) spans 660–692 (KTSSTSSSTPSLKHSTTPTPTPGTTTYNWPTGG). The span at 813-825 (TRTETTTDAEGCK) shows a compositional bias: basic and acidic residues. Residues 826 to 864 (KTSSTSKISTTPTSPTSSKPTPTSTSMTTTYNWPTGGTT) show a composition bias toward low complexity. Residues 899-908 (KTRTETTTDA) show a composition bias toward polar residues. Residues 914-942 (TSSTSLKPTSPSSSTASPPTTTYNWPTGG) are compositionally biased toward low complexity. Residues 1048–1057 (KTRTETTSDA) are compositionally biased toward polar residues. Residues 1063–1076 (TSTTQTPTTFNWPT) are compositionally biased toward low complexity. Residues 1114–1123 (NTTRTETTSD) are compositionally biased toward polar residues. A compositionally biased stretch (low complexity) spans 1130–1154 (TSSGTTSTMSPGTTGGTTVSRTTNS). Positions 1155-1164 (NNPIDSSTLE) are enriched in polar residues. A Sushi domain is found at 1239-1306 (ATCSSLNLNL…WSGTPEKCVA (68 aa)). 2 disulfide bridges follow: cysteine 1241/cysteine 1291 and cysteine 1273/cysteine 1304.

Its subcellular location is the secreted. This is an uncharacterized protein from Caenorhabditis elegans.